The sequence spans 473 residues: H(+)/Cl(-) exchange transporter ClcA (473 aa).

Residues 1 to 32 (MKTDTPSLEIPQAARLRRRQLIRQLLERDKTP) lie on the Cytoplasmic side of the membrane. A helical membrane pass occupies residues 33-69 (LAILFMAAVVGTLVGLAAVAFDKGVSWLQNQRMGALV). The Periplasmic portion of the chain corresponds to 70–76 (HTADNYP). A helical transmembrane segment spans residues 77-100 (LLLTVAFLCSAVLAMFGYFLVRKY). The short motif at 106 to 110 (GSGIP) is the Selectivity filter part_1 element. Serine 107 serves as a coordination point for chloride. The segment at residues 109 to 116 (IPEIEGAL) is an intramembrane region (helical). At 117-123 (EDQRPVR) the chain is on the cytoplasmic side. Helical transmembrane passes span 124–141 (WWRV…TLGG) and 148–166 (EGPT…LDIF). A Selectivity filter part_2 motif is present at residues 146-150 (GREGP). Residues 167-176 (RLKGDEARHT) are Cytoplasmic-facing. 2 consecutive intramembrane regions (helical) follow at residues 177-189 (LLAT…LAAA) and 193-201 (PLAGILFII). Over 202-214 (EEMRPQFRYTLIS) the chain is Cytoplasmic. A helical transmembrane segment spans residues 215–232 (IKAVFIGVIMSTIMYRIF). The Periplasmic segment spans residues 233–252 (NHEVALIDVGKLSDAPLNTL). The chain crosses the membrane as a helical span at residues 253-281 (WLYLILGIIFGIFGPIFNKWVLGMQDLLH). The Cytoplasmic segment spans residues 282–287 (RVHGGN). Residues 288-309 (ITKWVIMGGAIGGLCGLLGFVA) traverse the membrane as a helical segment. Over 310-329 (PATSGGGFNLIPIATAGNFS) the chain is Periplasmic. A run of 2 helical transmembrane segments spans residues 330–349 (MGML…LCFS) and 355–376 (GIFA…MVAV). The Selectivity filter part_3 signature appears at 355–359 (GIFAP). Residues isoleucine 356 and phenylalanine 357 each contribute to the chloride site. Residues 377 to 386 (ELFPQYHLEA) are Periplasmic-facing. The segment at residues 387 to 401 (GTFAIAGMGALLAAS) is an intramembrane region (helical). The note=Loop between two helices intramembrane region spans 402 to 404 (IRA). Residues 405–416 (PLTGIILVLEMT) constitute an intramembrane region (helical). An intramembrane region (note=Loop between two helices) is located at residues 417–421 (DNYQL). The helical transmembrane segment at 422–438 (ILPMIITGLGATLLAQF) threads the bilayer. Residues 439–473 (TGGKPLYSAILARTLAKQEAEQLARSKAASASENT) lie on the Cytoplasmic side of the membrane. Tyrosine 445 contacts chloride.

This sequence belongs to the chloride channel (TC 2.A.49) family. ClcA subfamily. In terms of assembly, homodimer.

It is found in the cell inner membrane. It carries out the reaction 2 chloride(in) + H(+)(out) = 2 chloride(out) + H(+)(in). Proton-coupled chloride transporter. Functions as antiport system and exchanges two chloride ions for 1 proton. Probably acts as an electrical shunt for an outwardly-directed proton pump that is linked to amino acid decarboxylation, as part of the extreme acid resistance (XAR) response. This is H(+)/Cl(-) exchange transporter ClcA from Escherichia fergusonii (strain ATCC 35469 / DSM 13698 / CCUG 18766 / IAM 14443 / JCM 21226 / LMG 7866 / NBRC 102419 / NCTC 12128 / CDC 0568-73).